The chain runs to 306 residues: uncharacterized protein (306 aa).

9 helical membrane passes run 6-26 (VQIM…FPGI), 37-57 (HLAL…AVLT), 67-87 (IPAI…LLNI), 91-111 (TVSA…SAML), 125-145 (WLGS…AGDF), 148-168 (SMSG…YFVF), 177-197 (GFIP…LVFL), 213-233 (LSIV…LAYV), and 251-271 (ALAL…LSLL). EamA domains follow at residues 17–140 (GLWA…LIAF) and 160–285 (FSES…FTYL).

It belongs to the EamA transporter family.

The protein resides in the cell membrane. This is an uncharacterized protein from Bacillus subtilis (strain 168).